The sequence spans 1040 residues: Multidrug resistance protein MdtB (1040 aa).

A run of 12 helical transmembrane segments spans residues 25–45 (LLMAAILLAGIIGYRFLPVAA), 347–367 (LMLAIALVVMIIYLFLRNIPA), 369–389 (IIPGVAVPLSLIGTFAVMVFL), 396–416 (LTLMALTIATGFVVDDAIVVI), 440–460 (IGFTIISLTFSLIAVLIPLLF), 472–492 (FAVTLAVAILISAVVSLTLTP), 537–557 (WLTLSVAFATLLLSVMLWIVI), 863–883 (LGSTVWLIVAAVVAMYIVLGV), 888–908 (FIHPITILSTLPTAGVGALLA), 910–930 (IIAGSELDIIAIIGIILLIGI), 968–988 (ILMTTLAALLGALPLMLSTGV), and 998–1018 (IAMVGGLLVSQVLTLFTTPVI).

The protein belongs to the resistance-nodulation-cell division (RND) (TC 2.A.6) family. MdtB subfamily. Part of a tripartite efflux system composed of MdtA, MdtB and MdtC. MdtB forms a heteromultimer with MdtC.

Its subcellular location is the cell inner membrane. The sequence is that of Multidrug resistance protein MdtB from Salmonella gallinarum (strain 287/91 / NCTC 13346).